The primary structure comprises 167 residues: Protein FAM163B (167 aa).

A helical transmembrane segment spans residues 6–26 (VVITGGILATVILLCIIAVLC). Serine 40 is modified (phosphoserine).

Belongs to the FAM163 family.

The protein localises to the membrane. In Mus musculus (Mouse), this protein is Protein FAM163B (Fam163b).